The chain runs to 357 residues: Thiamine thiazole synthase 3, chloroplastic (357 aa).

The transit peptide at 1–51 (MSISAAGVATGLGANVELKSNVGSSSSSVAGVRLFTSRKAQLRRCAAPATS) directs the protein to the chloroplast. Substrate is bound by residues alanine 103, 123-124 (EQ), glycine 131, and alanine 196. The residue at position 225 (cysteine 225) is a 2,3-didehydroalanine (Cys). Residues aspartate 227, histidine 242, methionine 294, and 304-306 (RMG) each bind substrate.

Belongs to the THI4 family. In terms of assembly, homooctamer. Fe cation serves as cofactor. Post-translationally, during the catalytic reaction, a sulfide is transferred from Cys-225 to a reaction intermediate, generating a dehydroalanine residue.

Its subcellular location is the plastid. It localises to the chloroplast. The enzyme catalyses [ADP-thiazole synthase]-L-cysteine + glycine + NAD(+) = [ADP-thiazole synthase]-dehydroalanine + ADP-5-ethyl-4-methylthiazole-2-carboxylate + nicotinamide + 3 H2O + 2 H(+). Its function is as follows. Involved in biosynthesis of the thiamine precursor thiazole. Catalyzes the conversion of NAD and glycine to adenosine diphosphate 5-(2-hydroxyethyl)-4-methylthiazole-2-carboxylic acid (ADT), an adenylated thiazole intermediate. The reaction includes an iron-dependent sulfide transfer from a conserved cysteine residue of the protein to a thiazole intermediate. The enzyme can only undergo a single turnover, which suggests it is a suicide enzyme. May have additional roles in adaptation to various stress conditions and in DNA damage tolerance. The sequence is that of Thiamine thiazole synthase 3, chloroplastic from Physcomitrium patens (Spreading-leaved earth moss).